The sequence spans 304 residues: MHPEPAPPPSHSNPELPVSGGSSTSGSRRSRRRSGDGEPSGAPPLPPPPPAVSYPDWIGQSYSEVMSLNEHSMQALSWRKLYLSRAKLKASSRTSALLSGFAMVAMVEVQLDTDHDYPPGLLIVFSACTTVLVAVHLFALMISTCILPNIEAVSNVHNLNSVKESPHERMHRHIELAWAFSTVIGTLLFLAEVVLLCWVKFLPLKRQAGQPSPTKPPAESVIVANHSDSSGITPGEAAAIASTAIMVPCGLVFIVFAVHFYRSLVSHKTDRQFQELNELAEFARLQDQLDHRGDHSLTPGTHYA.

The segment covering 1–11 (MHPEPAPPPSH) has biased composition (pro residues). The disordered stretch occupies residues 1 to 50 (MHPEPAPPPSHSNPELPVSGGSSTSGSRRSRRRSGDGEPSGAPPLPPPPP). Residues 1–89 (MHPEPAPPPS…KLYLSRAKLK (89 aa)) lie on the Cytoplasmic side of the membrane. The interval 3-49 (PEPAPPPSHSNPELPVSGGSSTSGSRRSRRRSGDGEPSGAPPLPPPP) is required for generation of inwardly rectifying CRAC currents. A compositionally biased stretch (low complexity) spans 12-27 (SNPELPVSGGSSTSGS). The AKAP5 association region stretch occupies residues 39-61 (PSGAPPLPPPPPAVSYPDWIGQS). Residues 41–50 (GAPPLPPPPP) are compositionally biased toward pro residues. The tract at residues 72–92 (SMQALSWRKLYLSRAKLKASS) is interaction with STIM1. A helical transmembrane segment spans residues 90-107 (ASSRTSALLSGFAMVAMV). Over 108-121 (EVQLDTDHDYPPGL) the chain is Extracellular. Residues 122–142 (LIVFSACTTVLVAVHLFALMI) traverse the membrane as a helical segment. Residues 143-175 (STCILPNIEAVSNVHNLNSVKESPHERMHRHIE) are Cytoplasmic-facing. The chain crosses the membrane as a helical span at residues 176-196 (LAWAFSTVIGTLLFLAEVVLL). Residues 197–237 (CWVKFLPLKRQAGQPSPTKPPAESVIVANHSDSSGITPGEA) lie on the Extracellular side of the membrane. N225 is a glycosylation site (N-linked (GlcNAc...) asparagine). The chain crosses the membrane as a helical span at residues 238–258 (AAIASTAIMVPCGLVFIVFAV). The Cytoplasmic segment spans residues 259–304 (HFYRSLVSHKTDRQFQELNELAEFARLQDQLDHRGDHSLTPGTHYA). Residues 275-295 (ELNELAEFARLQDQLDHRGDH) form an interaction with STIM1 region. T298 carries the post-translational modification Phosphothreonine.

Belongs to the Orai family. In terms of assembly, oligomerizes in homomeric and heteromeric ORAI complexes. Native CRAC channels most likely consist of hexameric ORAI heteromers, implying that diverse ORAI1, ORAI2 and ORAI3 subunit combinations with distinct biophysical properties can operate in a cell-type specific way. ARC channels are heteropentamers consisting of three ORAI1 and two ORAI3 subunits. Interacts with STIM1 and STIM2; this regulates channel activity. Interacts with CALM; this may displace STIM1 and STIM2 and might thereby modulate channel activity. Interacts (via N-terminus) with AKAP5 upon store depletion. Interacts with CRACR2A/EFCAB4B; the interaction is direct and takes place in absence of Ca(2+). Forms a complex with CRACR2A/EFCAB4B and STIM1 at low concentration of Ca(2+), the complex dissociates at elevated Ca(2+) concentrations. Interacts with ASPH (isoform 8). Interacts with SLC35G1. Interacts with UBQLN1. Interacts with ADCY8; interaction is calcium store depletion independent; interaction occurs in membrane raft; interaction increases markedly after store depletion; positively regulates SOCE-induced adenylate cyclase activity; contributes to the targeting of ADCY8 to discrete regions of the plasma membrane that are shielded from other calcium events. Interacts with EFHB; the interaction takes place upon Ca(2+)-store depletion. Interacts (via N- and C-termini) with ATP2C2 (via N-terminus); this interaction regulates Ca(2+) influx at the plasma membrane. Interacts with TSPAN18; this interaction regulates ORAI1 exit from the endoplasmic (ER), and/or Golgi, and trafficking to the cell surface. In terms of processing, N-glycosylated. N-glycosylation inhibits channel activity in T cells. Ubiquitinated. Post-translationally, cys-195 is oxidated, leading to inactivation of channel activity. Expressed in lactating mammary epithelium (at protein level).

The protein localises to the cell membrane. The protein resides in the basolateral cell membrane. The enzyme catalyses Ca(2+)(in) = Ca(2+)(out). With respect to regulation, oxidation at Cys-197 leads to inactivation of channel activity. Its function is as follows. Pore-forming subunit of two major inward rectifying Ca(2+) channels at the plasma membrane: Ca(2+) release-activated Ca(2+) (CRAC) channels and arachidonate-regulated Ca(2+)-selective (ARC) channels. Assembles with ORAI2 and ORAI3 to form hexameric CRAC channels that mediate Ca(2+) influx upon depletion of endoplasmic reticulum Ca(2+) store and channel activation by Ca(2+) sensor STIM1, a process known as store-operated Ca(2+) entry (SOCE). Various pore subunit combinations may account for distinct CRAC channel spatiotemporal and cell-type specific dynamics. ORAI1 mainly contributes to the generation of Ca(2+) plateaus involved in sustained Ca(2+) entry and is dispensable for cytosolic Ca(2+) oscillations, whereas ORAI2 and ORAI3 generate oscillatory patterns. CRAC channels assemble in Ca(2+) signaling microdomains where Ca(2+) influx is coupled to calmodulin and calcineurin signaling and activation of NFAT transcription factors recruited to ORAI1 via AKAP5. Activates NFATC2/NFAT1 and NFATC3/NFAT4-mediated transcriptional responses. CRAC channels are the main pathway for Ca(2+) influx in T cells and promote the immune response to pathogens by activating NFAT-dependent cytokine and chemokine transcription. Assembles with ORAI3 to form channels that mediate store-independent Ca(2+) influx in response to inflammatory metabolites arachidonate or its derivative leukotriene C4, termed ARC and LRC channels respectively. Plays a prominent role in Ca(2+) influx at the basolateral membrane of mammary epithelial cells independently of the Ca(2+) content of endoplasmic reticulum or Golgi stores. May mediate transepithelial transport of large quantities of Ca(2+) for milk secretion. In Mus musculus (Mouse), this protein is Calcium release-activated calcium channel protein 1 (Orai1).